Here is a 911-residue protein sequence, read N- to C-terminus: MAYQGSGSHSPPHYDDNGHRLQDLPHGSYEEEASRGLLSHQQGPFTGPFDDPQQHGSSTTRPVSGYSLSETYAPEAAYHDPYTQPSPGSVYSAQSAENPAAAFGVPGRVASPYARSDTSSTEAWRQRQAPGGGPGGLRRYATRKVKLVQGSVLSVDYPVPSAIQNAIQAKYRNDLEGGSEEFTHMRYTAATCDPNEFTLHNGYNLRPAMYNRHTELLIAITYYNEDKTLTSRTLHGVMQNIRDIVNLKKSEFWNKGGPAWQKIVVCLVFDGIDPCDKDTLDVLATIGVYQDGVMKRDVDGKETVAHIFEYTTQLSVTPNQQLIRPTDDGPSTLPPVQMMFCLKQKNSKKINSHRWLFNAFGRILNPEVCILLDAGTKPGPKSLLSLWEAFYNDKDLGGACGEIHAMLGKGWKNLINPLVAAQNFEYKISNILDKPLESSFGYVSVLPGAFSAYRFRAIMGRPLEQYFHGDHTLSKQLGKKGIEGMNIFKKNMFLAEDRILCFELVAKAGSKWHLTYVKASKAETDVPEGAPEFISQRRRWLNGSFAAGIYSLMHFGRMYKSGHNIVRMFFLHIQMLYNIFSTVLTWFSLASYWLTTTVIMDLVGTPSDNNGNKAFPFGKTATPIINTIVKYVYLGFLLLQFILALGNRPKGSKFSYLASFVVFGIIQVYVVIDALYLVVRAFSGSAPMDFTTDQGVGEFLKSFFSSSGAGIIIIALAATFGLYFVASFMYLDPWHMFTSFPAYMCVQSSYINILNVYAFSNWHDVSWGTKGSDKADALPSAKTTKDEGKEVVIEEIDKPQADIDSQFEATVKRALTPYVPPVEKEEKTLEDSYKSFRTRLVTFWIFSNAFLAVCITSDGVDKFGFTNSATDRTQRFFQALLWSNAVVALFRFIGACWFLGKTGLMCCFARR.

2 disordered regions span residues 1-66 and 107-138; these read MAYQ…VSGY and GRVA…GGLR. Basic and acidic residues predominate over residues 12 to 34; it reads PHYDDNGHRLQDLPHGSYEEEAS. Residues 54–66 are compositionally biased toward polar residues; that stretch reads QHGSSTTRPVSGY. 6 consecutive transmembrane segments (helical) span residues 579–599, 624–644, 659–679, 711–731, 840–860, and 879–899; these read IFST…TTVI, IINT…FILA, SFVV…YLVV, IIII…FMYL, LVTF…SDGV, and ALLW…CWFL.

The protein belongs to the chitin synthase family. Class III subfamily.

Its subcellular location is the cell membrane. The catalysed reaction is [(1-&gt;4)-N-acetyl-beta-D-glucosaminyl](n) + UDP-N-acetyl-alpha-D-glucosamine = [(1-&gt;4)-N-acetyl-beta-D-glucosaminyl](n+1) + UDP + H(+). Polymerizes chitin, a structural polymer of the cell wall and septum, by transferring the sugar moiety of UDP-GlcNAc to the non-reducing end of the growing chitin polymer. This chain is Chitin synthase G (chsG), found in Aspergillus fumigatus (strain ATCC MYA-4609 / CBS 101355 / FGSC A1100 / Af293) (Neosartorya fumigata).